Here is a 209-residue protein sequence, read N- to C-terminus: Probable GTP-binding protein EngB (209 aa).

Residues 22–198 (TPLEIAFVGR…NRTVGSWFDA (177 aa)) enclose the EngB-type G domain. Mg(2+)-binding residues include Ser-37 and Thr-59.

Belongs to the TRAFAC class TrmE-Era-EngA-EngB-Septin-like GTPase superfamily. EngB GTPase family. Requires Mg(2+) as cofactor.

Its function is as follows. Necessary for normal cell division and for the maintenance of normal septation. This chain is Probable GTP-binding protein EngB, found in Neisseria meningitidis serogroup C (strain 053442).